The following is a 597-amino-acid chain: Cysteine/serine-rich nuclear protein 3 (597 aa).

2 disordered regions span residues 22–64 and 348–407; these read EDVD…TPSS and CQGD…GFVE. Residues 42 to 52 show a composition bias toward low complexity; the sequence is SSESADSGDSV. Over residues 53-64 the composition is skewed to polar residues; the sequence is NPSTSNHFTPSS. The span at 348 to 359 shows a compositional bias: acidic residues; that stretch reads CQGDEEEEEEDG. A compositionally biased stretch (polar residues) spans 361–376; the sequence is SFCSGATDSSTQSLAP. Positions 378–401 are enriched in acidic residues; that stretch reads ESDEEEEEEEEEEEEEEEDDDDDK.

Belongs to the AXUD1 family. As to expression, detected only in the brain of 15 dpc, 18 dpc, newborn and P6 mice (at protein level).

It is found in the nucleus. In terms of biological role, binds to the consensus sequence 5'-AGAGTG-3' and has transcriptional activator activity. Plays a role in apoptosis. The chain is Cysteine/serine-rich nuclear protein 3 (Csrnp3) from Mus musculus (Mouse).